The following is a 392-amino-acid chain: Protein FAM53C (392 aa).

Methionine 1 is subject to N-acetylmethionine. The segment at 77–120 is disordered; the sequence is HLRPPSRGSSPKEQPLSQVLRPEPPDPEKLPVPPAPPSKRHCRS. The span at 83-93 shows a compositional bias: polar residues; sequence RGSSPKEQPLS. A phosphoserine mark is found at serine 122 and serine 162. Disordered stretches follow at residues 141–167, 203–303, and 340–364; these read LWTP…PKRV, SRPC…LDFD, and SASC…EGAV. The segment covering 203–215 has biased composition (polar residues); the sequence is SRPCATSPQSGSW. Phosphoserine is present on residues serine 232, serine 234, serine 255, serine 273, and serine 299. The span at 241–256 shows a compositional bias: low complexity; sequence ASRFLPSARSSPASSP. The span at 278-303 shows a compositional bias: basic and acidic residues; sequence LDARKTGVKRRHEEDPRRLRPSLDFD.

Belongs to the FAM53 family.

This chain is Protein FAM53C, found in Pongo abelii (Sumatran orangutan).